Consider the following 324-residue polypeptide: Beta-ketoacyl-[acyl-carrier-protein] synthase III (324 aa).

Active-site residues include Cys113 and His251. The interval 252 to 256 (QANKR) is ACP-binding. Asn281 is a catalytic residue.

Belongs to the thiolase-like superfamily. FabH family. In terms of assembly, homodimer.

The protein resides in the cytoplasm. The enzyme catalyses malonyl-[ACP] + acetyl-CoA + H(+) = 3-oxobutanoyl-[ACP] + CO2 + CoA. The protein operates within lipid metabolism; fatty acid biosynthesis. Its function is as follows. Catalyzes the condensation reaction of fatty acid synthesis by the addition to an acyl acceptor of two carbons from malonyl-ACP. Catalyzes the first condensation reaction which initiates fatty acid synthesis and may therefore play a role in governing the total rate of fatty acid production. Possesses both acetoacetyl-ACP synthase and acetyl transacylase activities. Its substrate specificity determines the biosynthesis of branched-chain and/or straight-chain of fatty acids. This chain is Beta-ketoacyl-[acyl-carrier-protein] synthase III, found in Bartonella bacilliformis (strain ATCC 35685 / KC583 / Herrer 020/F12,63).